Consider the following 555-residue polypeptide: Solute carrier family 22 member 2 (555 aa).

Residues 1–22 (MPTTVDDVLEHGGEFHFFQKQM) lie on the Cytoplasmic side of the membrane. A helical transmembrane segment spans residues 23-43 (FFLLALLSATFAPIYVGIVFL). Topologically, residues 44–150 (GFTPDHRCRS…LVCANSWMLD (107 aa)) are extracellular. Residue Asn-72 is glycosylated (N-linked (GlcNAc...) asparagine). A helical transmembrane segment spans residues 151–171 (LFQSSVNVGFFIGSMSIGYIA). The Cytoplasmic portion of the chain corresponds to 172-177 (DRFGRK). The chain crosses the membrane as a helical span at residues 178 to 198 (LCLLTTVLINAAAGVLMAISP). At 199-208 (TYTWMLIFRL) the chain is on the extracellular side. A helical transmembrane segment spans residues 209–229 (IQGLVSKAGWLIGYILITEFV). Topologically, residues 230 to 238 (GRRYRRTVG) are cytoplasmic. A helical membrane pass occupies residues 239-259 (IFYQVAYTVGLLVLAGVAYAL). At 260 to 263 (PHWR) the chain is on the extracellular side. Residues 264 to 284 (WLQFTVSLPNFFFLLYYWCIP) form a helical membrane-spanning segment. Residues 284 to 288 (PESPR) carry the Proline-rich sequence motif. At 285 to 348 (ESPRWLISQN…VRTPQIRKHT (64 aa)) the chain is on the cytoplasmic side. The helical transmembrane segment at 349 to 369 (MILMYNWFTSSVLYQGLIMHM) threads the bilayer. The Extracellular segment spans residues 370–375 (GLAGDN). Residues 376–396 (IYLDFFYSALVEFPAAFMIIL) form a helical membrane-spanning segment. The Cytoplasmic segment spans residues 397-414 (TIDRIGRRYPWAASNMVA). The chain crosses the membrane as a helical span at residues 415–435 (GAACLASVFIPGDLQWLKIII). At 436 to 441 (SCLGRM) the chain is on the extracellular side. Residues 442–462 (GITMAYEIVCLVNAELYPTFI) traverse the membrane as a helical segment. Residues 463–464 (RN) are Cytoplasmic-facing. A helical membrane pass occupies residues 465–485 (LGVHICSSMCDIGGIITPFLV). At 486 to 494 (YRLTNIWLE) the chain is on the extracellular side. Residues 495 to 515 (LPLMVFGVLGLVAGGLVLLLP) traverse the membrane as a helical segment. Residues 516 to 555 (ETKGKALPETIEEAENMQRPRKNKEKMIYLQVQKLDIPLN) are Cytoplasmic-facing.

Belongs to the major facilitator (TC 2.A.1) superfamily. Organic cation transporter (TC 2.A.1.19) family. Post-translationally, tyrosine phosphorylated by tyrosine-protein kinase YES1. Mainly expressed in kidney, in the cortex and medulla. Localized in testis, mostly to peritubular myoid cells and Leydig cells and also detected along the basal membrane of Sertoli cells. Expressed in brain, in neurons of the cerebral cortex and in various subcortical nuclei. In the brain, also detected in the dopaminergic regions of the substantia nigra. Expressed in tracheal and bronchial ciliated epithelium in the respiratory tract. Also detected in secretory phase endometrium, in scattered stromal cells. Expressed in spleen, placenta, small intestine and spinal cord. Weakly expressed in prostate, uterus and lung. In terms of tissue distribution, mainly expressed in kidney, bone marrow and testis. Expressed in colon, skeletal muscle, spinal cord, placenta and liver.

The protein resides in the basolateral cell membrane. It localises to the basal cell membrane. Its subcellular location is the apical cell membrane. The enzyme catalyses (R)-noradrenaline(out) = (R)-noradrenaline(in). It carries out the reaction (R)-adrenaline(out) = (R)-adrenaline(in). The catalysed reaction is serotonin(out) = serotonin(in). It catalyses the reaction dopamine(out) = dopamine(in). The enzyme catalyses histamine(out) = histamine(in). It carries out the reaction thiamine(in) = thiamine(out). The catalysed reaction is creatinine(in) = creatinine(out). It catalyses the reaction 1-methylnicotinamide(out) = 1-methylnicotinamide(in). The enzyme catalyses guanidine(out) = guanidine(in). It carries out the reaction choline(out) = choline(in). The catalysed reaction is agmatine(out) = agmatine(in). It catalyses the reaction putrescine(out) = putrescine(in). The enzyme catalyses spermidine(in) = spermidine(out). It carries out the reaction tyramine(in) = tyramine(out). The catalysed reaction is L-histidyl-L-proline diketopiperazine(in) = L-histidyl-L-proline diketopiperazine(out). It catalyses the reaction (R)-salsolinol(in) = (R)-salsolinol(out). The enzyme catalyses N-methyl-(R)-salsolinol(in) = N-methyl-(R)-salsolinol(out). It carries out the reaction acetylcholine(in) = acetylcholine(out). The catalysed reaction is prostaglandin F2alpha(out) = prostaglandin F2alpha(in). It catalyses the reaction prostaglandin E2(out) = prostaglandin E2(in). Its activity is regulated as follows. Tyrosine phosphorylation of the transporter leads to activation of the transport activity. TEA uptake is activated by tyrosine phosphorylation. Inhibited by cGMP, most likely through a cGMP-binding protein that interacts with OCT2. In terms of biological role, electrogenic voltage-dependent transporter that mediates the transport of a variety of organic cations such as endogenous bioactive amines, cationic drugs and xenobiotics. Functions as a Na(+)-independent, bidirectional uniporter. Cation cellular uptake or release is driven by the electrochemical potential, i.e. membrane potential and concentration gradient. However, may also engage electroneutral cation exchange when saturating concentrations of cation substrates are reached. Predominantly expressed at the basolateral membrane of hepatocytes and proximal tubules and involved in the uptake and disposition of cationic compounds by hepatic and renal clearance from the blood flow. Implicated in monoamine neurotransmitters uptake such as histamine, dopamine, adrenaline/epinephrine, noradrenaline/norepinephrine, serotonin and tyramine, thereby supporting a physiological role in the central nervous system by regulating interstitial concentrations of neurotransmitters. Also capable of transporting dopaminergic neuromodulators cyclo(his-pro), salsolinol and N-methyl-salsolinol, thereby involved in the maintenance of dopaminergic cell integrity in the central nervous system. Mediates the bidirectional transport of acetylcholine (ACh) at the apical membrane of ciliated cell in airway epithelium, thereby playing a role in luminal release of ACh from bronchial epithelium. Also transports guanidine and endogenous monoamines such as vitamin B1/thiamine, creatinine and N-1-methylnicotinamide (NMN). Mediates the uptake and efflux of quaternary ammonium compound choline. Mediates the bidirectional transport of polyamine agmatine and the uptake of polyamines putrescine and spermidine. Able to transport non-amine endogenous compounds such as prostaglandin E2 (PGE2) and prostaglandin F2-alpha (PGF2-alpha). Also involved in the uptake of xenobiotic 4-(4-(dimethylamino)styryl)-N-methylpyridinium (ASP). May contribute to regulate the transport of organic compounds in testis across the blood-testis-barrier. In contrast with isoform 1, not able to transport guanidine, creatinine, cimetidine and metformin. In Homo sapiens (Human), this protein is Solute carrier family 22 member 2.